We begin with the raw amino-acid sequence, 78 residues long: U-scoloptoxin(04)-Er1d (78 aa).

Residues 1–24 (MTRHLIFAAMLLVCLFVCWNAVGA) form the signal peptide. The propeptide occupies 25 to 28 (RDAR).

The protein belongs to the scoloptoxin-04 family. Contains 2 disulfide bonds. Expressed by the venom gland.

The protein localises to the secreted. This chain is U-scoloptoxin(04)-Er1d, found in Ethmostigmus rubripes (Giant centipede).